The chain runs to 629 residues: tRNA uridine 5-carboxymethylaminomethyl modification enzyme MnmG (629 aa).

FAD-binding positions include 13-18 (GGGHAG), V125, and S180. Position 273 to 287 (273 to 287 (GPRYCPSIEDKVMRF)) interacts with NAD(+). Residue Q370 participates in FAD binding.

This sequence belongs to the MnmG family. In terms of assembly, homodimer. Heterotetramer of two MnmE and two MnmG subunits. The cofactor is FAD.

Its subcellular location is the cytoplasm. Its function is as follows. NAD-binding protein involved in the addition of a carboxymethylaminomethyl (cmnm) group at the wobble position (U34) of certain tRNAs, forming tRNA-cmnm(5)s(2)U34. This is tRNA uridine 5-carboxymethylaminomethyl modification enzyme MnmG from Escherichia coli O139:H28 (strain E24377A / ETEC).